The sequence spans 204 residues: Small ribosomal subunit protein uS7 (204 aa).

An N-acetylmethionine modification is found at M1. At T2 the chain carries N-acetylthreonine; in 40S ribosomal protein S5, N-terminally processed. T14 bears the Phosphothreonine mark. N6-acetyllysine; alternate is present on K47. A Glycyl lysine isopeptide (Lys-Gly) (interchain with G-Cter in SUMO2); alternate cross-link involves residue K47. S142 bears the Phosphoserine mark.

The protein belongs to the universal ribosomal protein uS7 family. In terms of assembly, component of the small ribosomal subunit. Part of the small subunit (SSU) processome, composed of more than 70 proteins and the RNA chaperone small nucleolar RNA (snoRNA) U3.

Its subcellular location is the cytoplasm. It localises to the nucleus. It is found in the nucleolus. Component of the small ribosomal subunit. The ribosome is a large ribonucleoprotein complex responsible for the synthesis of proteins in the cell. Part of the small subunit (SSU) processome, first precursor of the small eukaryotic ribosomal subunit. During the assembly of the SSU processome in the nucleolus, many ribosome biogenesis factors, an RNA chaperone and ribosomal proteins associate with the nascent pre-rRNA and work in concert to generate RNA folding, modifications, rearrangements and cleavage as well as targeted degradation of pre-ribosomal RNA by the RNA exosome. This chain is Small ribosomal subunit protein uS7 (Rps5), found in Rattus norvegicus (Rat).